The chain runs to 148 residues: Large ribosomal subunit protein bL19 (148 aa).

The protein belongs to the bacterial ribosomal protein bL19 family.

Its function is as follows. This protein is located at the 30S-50S ribosomal subunit interface and may play a role in the structure and function of the aminoacyl-tRNA binding site. The sequence is that of Large ribosomal subunit protein bL19 from Paramagnetospirillum magneticum (strain ATCC 700264 / AMB-1) (Magnetospirillum magneticum).